Reading from the N-terminus, the 158-residue chain is 6,7-dimethyl-8-ribityllumazine synthase (158 aa).

5-amino-6-(D-ribitylamino)uracil contacts are provided by residues Phe-22, 57–59 (AVE), and 81–83 (AVI). Position 86-87 (86-87 (GT)) interacts with (2S)-2-hydroxy-3-oxobutyl phosphate. Residue His-89 is the Proton donor of the active site. Phe-114 provides a ligand contact to 5-amino-6-(D-ribitylamino)uracil. Arg-128 lines the (2S)-2-hydroxy-3-oxobutyl phosphate pocket.

This sequence belongs to the DMRL synthase family. As to quaternary structure, forms an icosahedral capsid composed of 60 subunits, arranged as a dodecamer of pentamers.

It carries out the reaction (2S)-2-hydroxy-3-oxobutyl phosphate + 5-amino-6-(D-ribitylamino)uracil = 6,7-dimethyl-8-(1-D-ribityl)lumazine + phosphate + 2 H2O + H(+). Its pathway is cofactor biosynthesis; riboflavin biosynthesis; riboflavin from 2-hydroxy-3-oxobutyl phosphate and 5-amino-6-(D-ribitylamino)uracil: step 1/2. Catalyzes the formation of 6,7-dimethyl-8-ribityllumazine by condensation of 5-amino-6-(D-ribitylamino)uracil with 3,4-dihydroxy-2-butanone 4-phosphate. This is the penultimate step in the biosynthesis of riboflavin. The polypeptide is 6,7-dimethyl-8-ribityllumazine synthase (Shewanella halifaxensis (strain HAW-EB4)).